A 570-amino-acid polypeptide reads, in one-letter code: MKLRYIINENKLVFTSCNMRDKIITGKKIIFSQSVAKDQTKNLSSFLSERFYSVNQSHNHSIIIGSSLSHQENDIEHDTILDTSGVLVTTDTNGIVNGARVAITDGLGGGNGDQEEDDEIYRVSHSSCENFLNCDQNIDTTLSLITQPKASDKKQTAPKTLQHTEASMAAFIYQNHPGKGYIGEFANIGDGLIIILDKRFKIKHMVSACHIYRGFGTWTPPSLQALATTANKDALLVRQTLKLAEGDIIISMTDGVWGELKTSLIAQTNDRRDIGVDKEYFKTLFDELTDAPYPSSFDIARIITQRAMSRSLERRKTLIKLINEIEQQHFHEKSVKTINEVLEYFIKTGHVETAQTLKAILFEDGLSDGITYFENIEIPLEMVMHDLKSRTVGDCSTINVTRIPYHLDELIRGFINYPEKHQILAPLFKARVKSEADLEEAFHRLSLEMVQPEIECPISETHFERAFKKETLDKTQAVLTHYFRISTGLDSKKNYQERLNDLSAYLSKESSLEKNDIKLLLSMLDSEIKPKTGVFQTLFGENQNKLYKAFHKKIELQLLDSEIENKNELK.

The protein localises to the secreted. It is found in the host cytoplasm. It carries out the reaction [Rab1 protein]-O-phosphocholine-L-serine + H2O = [Rab1 protein]-L-serine + phosphocholine + H(+). Functionally, virulence effector that plays a role in hijacking the host vesicular trafficking by recruiting the small guanosine triphosphatase (GTPase) Rab1 to the cytosolic face of the Legionella-containing vacuole (LCVs). Acts as a phosphocholine hydrolase by mediating the hydrolysis of phosphocholine to Ser residues of host RAB1 (RAB1A, RAB1B or RAB1C). Dephosphocholination of target proteins restores accessibility to GTPase effector LepB. Can act on both GDP-bound and GTP-bound Rab proteins. The sequence is that of Phosphocholine hydrolase Lem3 (lem3) from Legionella pneumophila subsp. pneumophila (strain Philadelphia 1 / ATCC 33152 / DSM 7513).